The following is a 531-amino-acid chain: Zinc finger CCCH-type with G patch domain-containing protein (531 aa).

Met-1 bears the N-acetylmethionine mark. The disordered stretch occupies residues 91 to 133 (EAPAAARGSGSETVPKAEAGPESAAGGQEEEEGEDEEELSGTK). Over residues 107–117 (AEAGPESAAGG) the composition is skewed to low complexity. Residues 118–129 (QEEEEGEDEEEL) are compositionally biased toward acidic residues. Residues 175–201 (KSLKPCPFFLEGKCRFKENCRFSHGQV) form a C3H1-type zinc finger. The tract at residues 267 to 289 (PPLRTEATESDSDSDGTGDSSYA) is disordered. The region spanning 333-379 (TRGIGSRLLTKMGYEFGKGLGRHAEGRVEPIHAVVLPRGKSLDQCVE) is the G-patch domain. The residue at position 373 (Ser-373) is a Phosphoserine. Disordered regions lie at residues 385-409 (TRVG…GGRP), 426-446 (APGA…DMYH), and 509-531 (RAQE…MTEF). Positions 426–438 (APGALEAGAAPAG) are enriched in low complexity. A compositionally biased stretch (basic and acidic residues) spans 518 to 531 (EQRKADTHKKMTEF).

As to quaternary structure, interacts with CHD4/Mi-2; the interaction is direct. In terms of processing, ubiquitinated in case of infection by HIV-1, leading to its degradation. Ubiquitination is mediated by the CUL4A-RBX1-DDB1-DCAF1/VPRBP complex that is hijacked by HIV-1 via interaction between HIV-1 Vpr and DCAF1/VPRBP. As to expression, widely expressed.

It localises to the nucleus. Functionally, transcription repressor that specifically binds the 5'-GGAG[GA]A[GA]A-3' consensus sequence. Represses transcription by recruiting the chromatin multiprotein complex NuRD to target promoters. Negatively regulates expression of EGFR, a gene involved in cell proliferation, survival and migration. Its ability to repress genes of the EGFR pathway suggest it may act as a tumor suppressor. Able to suppress breast carcinogenesis. Its function is as follows. Antagonizes the transcription repression by isoform 1 by competing for the binding of the NuRD complex. Does not bind DNA. This is Zinc finger CCCH-type with G patch domain-containing protein (ZGPAT) from Homo sapiens (Human).